Consider the following 243-residue polypeptide: tRNA (guanine-N(1)-)-methyltransferase (243 aa).

S-adenosyl-L-methionine-binding positions include G112 and 131–136 (LGDYVL).

It belongs to the RNA methyltransferase TrmD family. In terms of assembly, homodimer.

The protein localises to the cytoplasm. The enzyme catalyses guanosine(37) in tRNA + S-adenosyl-L-methionine = N(1)-methylguanosine(37) in tRNA + S-adenosyl-L-homocysteine + H(+). In terms of biological role, specifically methylates guanosine-37 in various tRNAs. This chain is tRNA (guanine-N(1)-)-methyltransferase, found in Leuconostoc mesenteroides subsp. mesenteroides (strain ATCC 8293 / DSM 20343 / BCRC 11652 / CCM 1803 / JCM 6124 / NCDO 523 / NBRC 100496 / NCIMB 8023 / NCTC 12954 / NRRL B-1118 / 37Y).